Here is a 163-residue protein sequence, read N- to C-terminus: Low molecular weight protein-tyrosine phosphatase A (163 aa).

C11 acts as the Nucleophile in catalysis. Residue R17 is part of the active site. Residue D126 is the Proton donor of the active site.

The protein belongs to the low molecular weight phosphotyrosine protein phosphatase family.

It catalyses the reaction O-phospho-L-tyrosyl-[protein] + H2O = L-tyrosyl-[protein] + phosphate. Functionally, key virulence factor required for mycobacterial survival within host macrophages. Exhibits protein tyrosine phosphatase activity. Its function is as follows. Supports mycobacteria survival during infection by modulation of the phagosome maturation and modulation of the normal host signaling pathways, including host innate immune responses and cell apoptosis. The polypeptide is Low molecular weight protein-tyrosine phosphatase A (ptpA) (Mycobacterium bovis (strain ATCC BAA-935 / AF2122/97)).